The sequence spans 270 residues: Bark lectin (270 aa).

A signal peptide spans 1-15 (ISITFFLLLLNKVNS). Residues Asn60, Asn76, and Asn127 are each glycosylated (N-linked (GlcNAc...) asparagine). Mn(2+) is bound by residues Glu141 and Asp143. Ca(2+)-binding residues include Asp143, His145, Asn147, and Asp150. 2 residues coordinate Mn(2+): Asp150 and His155. Asn201 carries an N-linked (GlcNAc...) asparagine glycan.

It belongs to the leguminous lectin family.

In terms of biological role, galNAc-specific lectin. This is Bark lectin from Styphnolobium japonicum (Japanese pagoda tree).